The following is a 647-amino-acid chain: Chaperone protein DnaK (647 aa).

Position 199 is a phosphothreonine; by autocatalysis (Thr-199). The disordered stretch occupies residues 602-647; sequence MYAQEQAQAGQQAGPGAGSASAGQSGEKPVEGEVVDAEFEEVKDKK. Low complexity predominate over residues 604–627; it reads AQEQAQAGQQAGPGAGSASAGQSG.

It belongs to the heat shock protein 70 family.

In terms of biological role, acts as a chaperone. The sequence is that of Chaperone protein DnaK from Nitrosomonas eutropha (strain DSM 101675 / C91 / Nm57).